The following is a 523-amino-acid chain: Sialate O-acetylesterase (523 aa).

The first 23 residues, 1–23 (MVAPGLVLGLVLPLILWADRSAG), serve as a signal peptide directing secretion. Residues N107, N138, N267, N290, N401, and N422 are each glycosylated (N-linked (GlcNAc...) asparagine).

It localises to the lysosome. It carries out the reaction N-acetyl-9-O-acetylneuraminate + H2O = N-acetylneuraminate + acetate + H(+). The enzyme catalyses an Ac-O-9-sialoglycoconjugate + H2O = a sialoglycoconjugate + acetate + H(+). Functionally, catalyzes the removal of O-acetyl ester groups from position 9 of the free diacetylated sialate N-acetyl-9-O-acetylneuraminate (Neu5,9Ac2) in the cytosol and of the diacetylated sialate residues of sialylglycoconjugates in the lysosomes. Together with the sialate-O-acetyltransferase they regulate the balance of acetylated sialoglycoconjugates, key players in various processes such as cell-cell interactions, host-pathogen recognition, and tumor antigenicity. This chain is Sialate O-acetylesterase (SIAE), found in Pongo abelii (Sumatran orangutan).